A 228-amino-acid chain; its full sequence is Small ribosomal subunit protein uS10m (228 aa).

The transit peptide at 1–17 directs the protein to the mitochondrion; the sequence is MKRYMFGTLPRVQPKRC.

It belongs to the universal ribosomal protein uS10 family. In terms of assembly, component of the mitochondrial small ribosomal subunit (mt-SSU). Mature yeast 74S mitochondrial ribosomes consist of a small (37S) and a large (54S) subunit. The 37S small subunit contains a 15S ribosomal RNA (15S mt-rRNA) and at least 32 different proteins. The 54S large subunit contains a 21S rRNA (21S mt-rRNA) and at least 45 different proteins.

The protein resides in the mitochondrion. In terms of biological role, component of the mitochondrial ribosome (mitoribosome), a dedicated translation machinery responsible for the synthesis of mitochondrial genome-encoded proteins, including at least some of the essential transmembrane subunits of the mitochondrial respiratory chain. The mitoribosomes are attached to the mitochondrial inner membrane and translation products are cotranslationally integrated into the membrane. The polypeptide is Small ribosomal subunit protein uS10m (rsm10) (Schizosaccharomyces pombe (strain 972 / ATCC 24843) (Fission yeast)).